The chain runs to 397 residues: Tryptophan synthase beta chain (397 aa).

Lys-88 is subject to N6-(pyridoxal phosphate)lysine.

Belongs to the TrpB family. In terms of assembly, tetramer of two alpha and two beta chains. Requires pyridoxal 5'-phosphate as cofactor.

The enzyme catalyses (1S,2R)-1-C-(indol-3-yl)glycerol 3-phosphate + L-serine = D-glyceraldehyde 3-phosphate + L-tryptophan + H2O. It participates in amino-acid biosynthesis; L-tryptophan biosynthesis; L-tryptophan from chorismate: step 5/5. Its function is as follows. The beta subunit is responsible for the synthesis of L-tryptophan from indole and L-serine. This chain is Tryptophan synthase beta chain, found in Haemophilus influenzae (strain 86-028NP).